The primary structure comprises 369 residues: Dof zinc finger protein DOF2.5 (369 aa).

The Dof-type zinc-finger motif lies at 80–134 (LNCPRCNSTNTKFCYYNNYSLTQPRYFCKGCRRYWTEGGSLRNVPVGGSSRKNKR). Zn(2+)-binding residues include C82, C85, C107, and C110. Disordered stretches follow at residues 120 to 149 (LRNVPVGGSSRKNKRSSSSSSSNILQTIPS), 203 to 224 (EGNGNITHQQQPSSSSSVYGSS), 284 to 304 (TDHQGLGHNSNNRSEALHSDH), and 322 to 369 (SSSI…GSSW). The segment covering 214-224 (PSSSSSVYGSS) has biased composition (low complexity). The segment covering 284 to 297 (TDHQGLGHNSNNRS) has biased composition (polar residues). Residues 342 to 362 (NNNNNNNSSPNNGYWSGMFST) are compositionally biased toward low complexity.

As to expression, expressed in the vascular system of the mother plant, but not present in the seed and embryo. In maturing siliques, found all through the funiculus connecting the placenta to the ovule, but not in the ovule.

It localises to the nucleus. In terms of biological role, transcription factor specifically involved in the maternal control of seed germination. Regulates transcription by binding to a 5'-AA[AG]G-3' consensus core sequence. May ensure the activation of a component that would trigger germination as a consequence of red light perception. This is Dof zinc finger protein DOF2.5 (DOF2.5) from Arabidopsis thaliana (Mouse-ear cress).